A 414-amino-acid chain; its full sequence is Tryptophan synthase beta chain (414 aa).

Residues 1–28 (MVSTISRQDQNNNDDLNQPSKEGRFGKY) are disordered. The span at 8 to 18 (QDQNNNDDLNQ) shows a compositional bias: low complexity. Residue lysine 108 is modified to N6-(pyridoxal phosphate)lysine.

It belongs to the TrpB family. Tetramer of two alpha and two beta chains. Pyridoxal 5'-phosphate is required as a cofactor.

It carries out the reaction (1S,2R)-1-C-(indol-3-yl)glycerol 3-phosphate + L-serine = D-glyceraldehyde 3-phosphate + L-tryptophan + H2O. It participates in amino-acid biosynthesis; L-tryptophan biosynthesis; L-tryptophan from chorismate: step 5/5. The beta subunit is responsible for the synthesis of L-tryptophan from indole and L-serine. The polypeptide is Tryptophan synthase beta chain (Prochlorococcus marinus subsp. pastoris (strain CCMP1986 / NIES-2087 / MED4)).